Here is a 101-residue protein sequence, read N- to C-terminus: Urinary protein 3 (101 aa).

The N-terminal stretch at 1-21 (MGKHILLLPLGLSLLMSSLLA) is a signal peptide. The UPAR/Ly6 domain occupies 22-99 (LQCFRCISFD…CSATPFCNMV (78 aa)). Cystine bridges form between Cys24-Cys51, Cys27-Cys36, Cys43-Cys70, Cys73-Cys89, and Cys90-Cys96.

Its subcellular location is the secreted. The sequence is that of Urinary protein 3 from Rattus norvegicus (Rat).